The chain runs to 348 residues: Mannonate dehydratase (348 aa).

It belongs to the mannonate dehydratase family. Requires Fe(2+) as cofactor. Mn(2+) is required as a cofactor.

It carries out the reaction D-mannonate = 2-dehydro-3-deoxy-D-gluconate + H2O. It functions in the pathway carbohydrate metabolism; pentose and glucuronate interconversion. Its function is as follows. Catalyzes the dehydration of D-mannonate. This Staphylococcus haemolyticus (strain JCSC1435) protein is Mannonate dehydratase.